The sequence spans 162 residues: Cyclic pyranopterin monophosphate synthase (162 aa).

Residues 75–77 (LCH) and 113–114 (ME) each bind substrate. Asp-128 is an active-site residue.

Belongs to the MoaC family. As to quaternary structure, homohexamer; trimer of dimers.

It carries out the reaction (8S)-3',8-cyclo-7,8-dihydroguanosine 5'-triphosphate = cyclic pyranopterin phosphate + diphosphate. It participates in cofactor biosynthesis; molybdopterin biosynthesis. Catalyzes the conversion of (8S)-3',8-cyclo-7,8-dihydroguanosine 5'-triphosphate to cyclic pyranopterin monophosphate (cPMP). This is Cyclic pyranopterin monophosphate synthase from Burkholderia ambifaria (strain ATCC BAA-244 / DSM 16087 / CCUG 44356 / LMG 19182 / AMMD) (Burkholderia cepacia (strain AMMD)).